Reading from the N-terminus, the 54-residue chain is uncharacterized protein (54 aa).

Residues methionine 1–serine 23 form the signal peptide.

This is an uncharacterized protein from Acheta domesticus (House cricket).